Here is a 159-residue protein sequence, read N- to C-terminus: uncharacterized protein (159 aa).

Residues 1–13 are compositionally biased toward basic and acidic residues; that stretch reads MESRPSGRQHASE. The disordered stretch occupies residues 1-35; that stretch reads MESRPSGRQHASEGDGDQSPTQCAGMRSSGRSDQP.

This is an uncharacterized protein from Homo sapiens (Human).